A 338-amino-acid polypeptide reads, in one-letter code: Lipoate-protein ligase A (338 aa).

The 188-residue stretch at 29–216 (PATQRVLFLW…AFFAYYGERV (188 aa)) folds into the BPL/LPL catalytic domain. Residues Arg71, 76 to 79 (GAVF), and Lys134 each bind ATP. Position 134 (Lys134) interacts with (R)-lipoate.

It belongs to the LplA family. Monomer.

Its subcellular location is the cytoplasm. It carries out the reaction L-lysyl-[lipoyl-carrier protein] + (R)-lipoate + ATP = N(6)-[(R)-lipoyl]-L-lysyl-[lipoyl-carrier protein] + AMP + diphosphate + H(+). It functions in the pathway protein modification; protein lipoylation via exogenous pathway; protein N(6)-(lipoyl)lysine from lipoate: step 1/2. It participates in protein modification; protein lipoylation via exogenous pathway; protein N(6)-(lipoyl)lysine from lipoate: step 2/2. Its function is as follows. Catalyzes both the ATP-dependent activation of exogenously supplied lipoate to lipoyl-AMP and the transfer of the activated lipoyl onto the lipoyl domains of lipoate-dependent enzymes. This Cronobacter sakazakii (strain ATCC BAA-894) (Enterobacter sakazakii) protein is Lipoate-protein ligase A.